We begin with the raw amino-acid sequence, 381 residues long: Succinate--CoA ligase [ADP-forming] subunit beta (381 aa).

The 228-residue stretch at 9–236 (KTIFADAGIP…ESYEDDLERK (228 aa)) folds into the ATP-grasp domain. Residues Lys45, 52 to 54 (GRG), Glu91, Val94, and Glu99 contribute to the ATP site. Asn191 and Asp205 together coordinate Mg(2+). Residues Asn256 and 313 to 315 (GIT) contribute to the substrate site.

It belongs to the succinate/malate CoA ligase beta subunit family. As to quaternary structure, heterotetramer of two alpha and two beta subunits. Requires Mg(2+) as cofactor.

The catalysed reaction is succinate + ATP + CoA = succinyl-CoA + ADP + phosphate. It carries out the reaction GTP + succinate + CoA = succinyl-CoA + GDP + phosphate. It functions in the pathway carbohydrate metabolism; tricarboxylic acid cycle; succinate from succinyl-CoA (ligase route): step 1/1. Its function is as follows. Succinyl-CoA synthetase functions in the citric acid cycle (TCA), coupling the hydrolysis of succinyl-CoA to the synthesis of either ATP or GTP and thus represents the only step of substrate-level phosphorylation in the TCA. The beta subunit provides nucleotide specificity of the enzyme and binds the substrate succinate, while the binding sites for coenzyme A and phosphate are found in the alpha subunit. This Halorubrum lacusprofundi (strain ATCC 49239 / DSM 5036 / JCM 8891 / ACAM 34) protein is Succinate--CoA ligase [ADP-forming] subunit beta.